Reading from the N-terminus, the 381-residue chain is Prostatic acid phosphatase (381 aa).

The signal sequence occupies residues 1-31 (MRAVPLPLSRTASLSLGFLLLLSLCLDPGQA). Arg42 contributes to the substrate binding site. The Nucleophile role is filled by His43. Arg46 is a substrate binding site. Asn93 is a glycosylation site (N-linked (GlcNAc...) asparagine). A substrate-binding site is contributed by Arg110. Intrachain disulfides connect Cys160–Cys371, Cys214–Cys312, and Cys346–Cys350. Asn219 is a glycosylation site (N-linked (GlcNAc...) asparagine). His288 is a substrate binding site. Asp289 (proton donor) is an active-site residue. A glycan (N-linked (GlcNAc...) asparagine) is linked at Asn332.

The protein belongs to the histidine acid phosphatase family. In terms of assembly, homodimer; dimer formation is required for phosphatase activity. In terms of tissue distribution, expressed in salivary gland, thymus and thyroid gland. As to expression, widely expressed in prostate lobes, brain, kidney, liver, lung, muscle, placenta, salivary gland, spleen, thyroid and thymus. Locates to Schwann cells and fibroblasts. Expressed in peptidergic and non-peptidergic nociceptive (pain-sensing) neurons. Preferentially expressed in non-peptidergic doral root ganglia neurons.

The protein resides in the secreted. It localises to the cell membrane. The protein localises to the lysosome membrane. The enzyme catalyses a phosphate monoester + H2O = an alcohol + phosphate. The catalysed reaction is a ribonucleoside 5'-phosphate + H2O = a ribonucleoside + phosphate. It carries out the reaction 1-(9Z-octadecenoyl)-sn-glycero-3-phosphate + H2O = 1-(9Z-octadecenoyl)-sn-glycerol + phosphate. It catalyses the reaction O-phospho-L-tyrosyl-[protein] + H2O = L-tyrosyl-[protein] + phosphate. Functionally, a non-specific tyrosine phosphatase that dephosphorylates a diverse number of substrates under acidic conditions (pH 4-6) including alkyl, aryl, and acyl orthophosphate monoesters and phosphorylated proteins. Has lipid phosphatase activity and inactivates lysophosphatidic acid in seminal plasma. In terms of biological role, in addition to its tyrosine phosphatase activity, also has ecto-5'-nucleotidase activity in dorsal root ganglion (DRG) neurons. Generates adenosine from AMP. This extracellular adenosine leads to a decrease in chronic pain by activating A1R in nociceptive neurons. The protein is Prostatic acid phosphatase (Acp3) of Mus musculus (Mouse).